A 213-amino-acid polypeptide reads, in one-letter code: MAITQFRLFKVCTCLATVFSFLKRLICRSGRGRKLSGDQITLPTTVDYSSVPKQTDVEEWTSWDEDAPTSVKIEGGNGNVATQQNSLEQLEPDYFKDMTPTIRKTQKIVIKKREPLNFGVPDGSTGFSSRLAATQDMPFIHQSSELGDLDTWQENSNAWEEEEDAAWQAEEVLRQQKIADREKRAAEQQRKKMEKEAQRLMKKEQNKIGVKLS.

The Extracellular segment spans residues methionine 1–arginine 7. Residues leucine 8–cysteine 27 traverse the membrane as a helical; Signal-anchor for type III membrane protein segment. Residues arginine 28–serine 213 lie on the Cytoplasmic side of the membrane. Serine 36 is subject to Phosphoserine. Threonine 41 carries the phosphothreonine modification. At tyrosine 94 the chain carries Phosphotyrosine. A coiled-coil region spans residues glutamate 163–lysine 211. Residues alanine 179–asparagine 206 are compositionally biased toward basic and acidic residues. The tract at residues alanine 179–serine 213 is disordered.

Homodimer. As to expression, widely expressed. Expressed in heart, brain, spleen, liver, kidney and testis.

It is found in the golgi apparatus membrane. Functionally, may participate in suppression of cell proliferation and induces apoptotic cell death through activation of interleukin-1-beta converting enzyme (ICE)-like proteases. This is Receptor-binding cancer antigen expressed on SiSo cells (Ebag9) from Mus musculus (Mouse).